Reading from the N-terminus, the 421-residue chain is ATP-dependent RNA helicase RhlB (421 aa).

A Q motif motif is present at residues Q9–A37. Residues L40–V219 enclose the Helicase ATP-binding domain. ATP is bound at residue A53–T60. The DEAD box motif lies at D165–D168. In terms of domain architecture, Helicase C-terminal spans R245–M390. The segment at P396–G421 is disordered. The span at R403–P414 shows a compositional bias: low complexity.

This sequence belongs to the DEAD box helicase family. RhlB subfamily. In terms of assembly, component of the RNA degradosome, which is a multiprotein complex involved in RNA processing and mRNA degradation.

The protein resides in the cytoplasm. It catalyses the reaction ATP + H2O = ADP + phosphate + H(+). Functionally, DEAD-box RNA helicase involved in RNA degradation. Has RNA-dependent ATPase activity and unwinds double-stranded RNA. In Klebsiella pneumoniae subsp. pneumoniae (strain ATCC 700721 / MGH 78578), this protein is ATP-dependent RNA helicase RhlB.